Consider the following 418-residue polypeptide: Glutamate dehydrogenase (418 aa).

The active site involves Lys105. Gly217–Tyr223 is an NAD(+) binding site.

Belongs to the Glu/Leu/Phe/Val dehydrogenases family. As to quaternary structure, homohexamer.

It is found in the cytoplasm. The enzyme catalyses L-glutamate + NAD(+) + H2O = 2-oxoglutarate + NH4(+) + NADH + H(+). It catalyses the reaction L-glutamate + NADP(+) + H2O = 2-oxoglutarate + NH4(+) + NADPH + H(+). This is Glutamate dehydrogenase (gdhA) from Aeropyrum pernix (strain ATCC 700893 / DSM 11879 / JCM 9820 / NBRC 100138 / K1).